The sequence spans 453 residues: MFKKDSIVAIATPPGKGGIGIIRVSGNLSVKIAKIFLKRLPKEKQAEYIPFYSKNGNTLDQGIALFFKSPKSLTGEDVLEFQAHGSPVALNFLLQEILSIKGMRLAKPGEFLERAFINGKIDLIQAEAISDLINSCSIQAAKSALISIRGYFSKKINNLILSIKKLRMKIEVDIDFSEENFNKISIECIKHDLEKIILNINKIQCSFNRGAILKEGSKIVIIGKPNSGKSSIFNILSGNNNAIVTSIEGTTRDILHEHIYLDNIPLHIYDTAGLRKTDDKIEKIGILRALKEIKTSDHILLIVDSNIDKSNDINLIWPKFNSNIKNKITIIRNKIDLSKEIPEIKIFKKNNIISLSAYTGEGVDILIKYLKDLNCLLLNEEGCILARTRHILEIKKAKNNILNAKKLLNKYNLSDFVSEELRIAQSCLEKILGINNNSNDFLNEIFSNFCIGK.

(6S)-5-formyl-5,6,7,8-tetrahydrofolate is bound by residues Arg-23, Glu-80, and Lys-120. The region spanning 216–375 (GSKIVIIGKP…LIKYLKDLNC (160 aa)) is the TrmE-type G domain. Asn-226 is a binding site for K(+). Residues 226 to 231 (NSGKSS), 245 to 251 (TSIEGTT), and 270 to 273 (DTAG) contribute to the GTP site. Mg(2+) is bound at residue Ser-230. Residues Thr-245, Ile-247, and Thr-250 each contribute to the K(+) site. Mg(2+) is bound at residue Thr-251. (6S)-5-formyl-5,6,7,8-tetrahydrofolate is bound at residue Lys-453.

It belongs to the TRAFAC class TrmE-Era-EngA-EngB-Septin-like GTPase superfamily. TrmE GTPase family. Homodimer. Heterotetramer of two MnmE and two MnmG subunits. Requires K(+) as cofactor.

It localises to the cytoplasm. Functionally, exhibits a very high intrinsic GTPase hydrolysis rate. Involved in the addition of a carboxymethylaminomethyl (cmnm) group at the wobble position (U34) of certain tRNAs, forming tRNA-cmnm(5)s(2)U34. This is tRNA modification GTPase MnmE from Wigglesworthia glossinidia brevipalpis.